A 307-amino-acid chain; its full sequence is MSLLRLTFLGTSAAQPTLHRNLSGLAVKAHSDLLLFDCGEGSQRQMVRYGTGFTVDAVFFTHFHADHYLGIIGFLRTLGMTGRSEPIHLYGPPSAKRLLHQAVHLGVESMSFPVEIHELKDGDVVPRKGYAVHAVGVDHRINALGYALVEDDRPGRFNLDVARSLGVPEGPSFGKLQRGEPVTLEDGRTVKPEDVLGAPRPGRRLVISGDTRPCPALVKAAKDADLLVHESTFSDDEQERAVETRHSTAREAARVAREAGARRLVLTHLSSRHDTDPSKLLTQAREEYQGPVEVAFDGFTVELPLRD.

Zn(2+) contacts are provided by histidine 62, histidine 64, aspartate 66, histidine 67, histidine 139, aspartate 210, and histidine 268. The active-site Proton acceptor is aspartate 66.

The protein belongs to the RNase Z family. As to quaternary structure, homodimer. The cofactor is Zn(2+).

The catalysed reaction is Endonucleolytic cleavage of RNA, removing extra 3' nucleotides from tRNA precursor, generating 3' termini of tRNAs. A 3'-hydroxy group is left at the tRNA terminus and a 5'-phosphoryl group is left at the trailer molecule.. Its function is as follows. Zinc phosphodiesterase, which displays some tRNA 3'-processing endonuclease activity. Probably involved in tRNA maturation, by removing a 3'-trailer from precursor tRNA. In Myxococcus xanthus (strain DK1622), this protein is Ribonuclease Z.